A 152-amino-acid chain; its full sequence is SKP1-like protein 8 (152 aa).

Positions Thr-94–Glu-152 are interaction with the F-box domain of F-box proteins.

It belongs to the SKP1 family. In terms of assembly, part of a SCF (SKP1-cullin-F-box) protein ligase complex. In terms of tissue distribution, restricted to siliques.

The protein resides in the nucleus. It participates in protein modification; protein ubiquitination. Its function is as follows. Involved in ubiquitination and subsequent proteasomal degradation of target proteins. Together with CUL1, RBX1 and a F-box protein, it forms a SCF E3 ubiquitin ligase complex. The functional specificity of this complex depends on the type of F-box protein. In the SCF complex, it serves as an adapter that links the F-box protein to CUL1. This is SKP1-like protein 8 (ASK8) from Arabidopsis thaliana (Mouse-ear cress).